A 398-amino-acid chain; its full sequence is Cytochrome b (398 aa).

A helical transmembrane segment spans residues 45 to 65 (LGSIAGIALVIQIITGVILAM). Residues H95 and H109 each coordinate heme b. 9 helical membrane passes run 96 to 116 (AVGA…GLYY), 129 to 149 (IGII…VLPW), 164 to 184 (FSAI…GFSV), 192 to 212 (FFSL…LHLV), 245 to 265 (FVGF…EPNY), 277 to 297 (PLVT…YAIL), 304 to 324 (LGGV…PWLD), 339 to 359 (MAFW…GQPA), and 366 to 386 (ISRF…PLIG). H196 and H210 together coordinate heme b.

The protein belongs to the cytochrome b family. As to quaternary structure, the main subunits of complex b-c1 are: cytochrome b, cytochrome c1 and the Rieske protein. Requires heme b as cofactor.

It is found in the cell membrane. Component of the ubiquinol-cytochrome c reductase complex (complex III or cytochrome b-c1 complex), which is a respiratory chain that generates an electrochemical potential coupled to ATP synthesis. The protein is Cytochrome b (petB) of Rickettsia conorii (strain ATCC VR-613 / Malish 7).